Reading from the N-terminus, the 210-residue chain is Mitochondrial cardiolipin hydrolase (210 aa).

The Mitochondrial intermembrane segment spans residues 1–6 (MLLWGR). A helical membrane pass occupies residues 7 to 24 (WKVVAGLAGLALSLELLL). The Cytoplasmic segment spans residues 25-210 (RYMRRRKPIR…YDFFPEKENK (186 aa)). In terms of domain architecture, PLD phosphodiesterase spans 138 to 165 (SSGYMHHKFAVVDGTVVLTGSLNWTVQA). Catalysis depends on residues His-143, Lys-145, and Asp-150.

This sequence belongs to the phospholipase D family. MitoPLD/Zucchini subfamily. Homodimer.

The protein localises to the mitochondrion outer membrane. The enzyme catalyses a cardiolipin + H2O = a 1,2-diacyl-sn-glycero-3-phospho-(1'-sn-glycerol) + a 1,2-diacyl-sn-glycero-3-phosphate + H(+). Presents phospholipase and nuclease activities, depending on the different physiological conditions. Plays a key role in mitochondrial fusion and fission via its phospholipase activity. In its phospholipase role, it uses the mitochondrial lipid cardiolipin as substrate to generate phosphatidate (PA or 1,2-diacyl-sn-glycero-3-phosphate), a second messenger signaling lipid. Production of PA facilitates Mitofusin-mediated fusion, whereas the cleavage of PA by the Lipin family of phosphatases produces diacylgycerol (DAG) which promotes mitochondrial fission. Regulates mitochondrial shape through facilitating mitochondrial fusion. During spermatogenesis, plays a critical role in PIWI-interacting RNA (piRNA) biogenesis. piRNAs provide essential protection against the activity of mobile genetic elements. piRNA-mediated transposon silencing is thus critical for maintaining genome stability, in particular in germline cells when transposons are mobilized as a consequence of wide-spread genomic demethylation. Has been shown to be a backbone-non-specific, single strand-specific nuclease, cleaving either RNA or DNA substrates with similar affinity. Produces 5' phosphate and 3' hydroxyl termini, suggesting it could directly participate in the processing of primary piRNA transcripts. Has been proposed to act as a cardiolipin hydrolase to generate phosphatidic acid at mitochondrial surface. Although it cannot be excluded that it can act as a phospholipase in some circumstances, this activity could not be confirmed. The sequence is that of Mitochondrial cardiolipin hydrolase (pld6) from Xenopus tropicalis (Western clawed frog).